An 83-amino-acid chain; its full sequence is Putative potassium channel toxin Ts20 (83 aa).

The N-terminal stretch at 1 to 18 (MKLDIVLIMFVTFSTTLA) is a signal peptide.

Contains 3 disulfide bonds. As to expression, expressed by the venom gland.

It localises to the secreted. Reversibly inhibits potassium channels. This chain is Putative potassium channel toxin Ts20, found in Tityus serrulatus (Brazilian scorpion).